Here is a 158-residue protein sequence, read N- to C-terminus: MTLFNLTDLASTLPRNARLIGLDPGSKIIGIALSDVGRRLATPYGAMKRGKLAEAAATILDIARKEGAAALIIGLPLSMDGSIGPAAQAARDWAHAIARETGLPVAMMDERLSSAAVNRALIEADVTRAKRAGRVDAAAASYMLQGALDLLNEPRPEE.

The protein belongs to the YqgF nuclease family.

The protein localises to the cytoplasm. In terms of biological role, could be a nuclease involved in processing of the 5'-end of pre-16S rRNA. This Acidiphilium cryptum (strain JF-5) protein is Putative pre-16S rRNA nuclease.